Consider the following 263-residue polypeptide: Oxygen-evolving enhancer protein 2, chloroplastic (263 aa).

The N-terminal 78 residues, 1-78 (MAAASCFHAL…VGTKVSPADA (78 aa)), are a transit peptide targeting the chloroplast. The segment covering 14 to 30 (ARSSSSSLQSSSSRLPA) has biased composition (low complexity). Residues 14–34 (ARSSSSSLQSSSSRLPAPIKP) form a disordered region.

It belongs to the PsbP family.

The protein localises to the plastid. Its subcellular location is the chloroplast thylakoid membrane. May be involved in the regulation of photosystem II. The chain is Oxygen-evolving enhancer protein 2, chloroplastic from Helianthus annuus (Common sunflower).